Consider the following 363-residue polypeptide: MTANPSLVLNKIDDISFETYDAPEISEPTDVLVQVKKTGICGSDIHFYAHGRIGNFVLTKPMVLGHESAGTVVQVGKGVTSLKVGDNVAIEPGIPSRFSDEYKSGHYNLCPHMAFAATPNSKEGEPNPPGTLCKYFKSPEDFLVKLPDHVSLELGALVEPLSVGVHASKLGSVAFGDYVAVFGAGPVGLLAAAVAKTFGAKGVIVVDIFDNKLKMAKDIGAATHTFNSKTGGSEELIKAFGGNVPNVVLECTGAEPCIKLGVDAIAPGGRFVQVGNAAGPVSFPITVFAMKELTLFGSFRYGFNDYKTAVGIFDTNYQNGRENAPIDFEQLITHRYKFKDAIEAYDLVRAGKGAVKCLIDGPE.

Zn(2+) is bound by residues Cys41, His66, and Glu159. 183–188 (GAGPVG) contributes to the NAD(+) binding site.

This sequence belongs to the zinc-containing alcohol dehydrogenase family. It depends on Zn(2+) as a cofactor.

It carries out the reaction xylitol + NAD(+) = D-xylulose + NADH + H(+). It participates in carbohydrate degradation; L-arabinose degradation via L-arabinitol; D-xylulose 5-phosphate from L-arabinose (fungal route): step 4/5. This is D-xylulose reductase (XYL2) from Scheffersomyces stipitis (strain ATCC 58785 / CBS 6054 / NBRC 10063 / NRRL Y-11545) (Yeast).